Reading from the N-terminus, the 107-residue chain is Virulence factor PGA16 (107 aa).

The signal sequence occupies residues Met-1–Ala-18. The interval Ser-26–Asn-56 is disordered. Positions Asn-33–Asn-56 are enriched in low complexity. 2 N-linked (GlcNAc...) asparagine glycosylation sites follow: Asn-53 and Asn-56. Gly-76 carries the GPI-anchor amidated glycine lipid modification. The propeptide at Val-77–Leu-107 is removed in mature form.

The protein localises to the cell membrane. Its function is as follows. Cell surface GPI-anchored protein required for virulence. Mediates hyphal ramification which is important for the interaction with host cells. In Candida albicans (strain SC5314 / ATCC MYA-2876) (Yeast), this protein is Virulence factor PGA16 (PGA16).